The following is a 340-amino-acid chain: MSAVTQVVETAIGCVIPSCIEFGSSMRIATSLGSPSVTQSPCVNRDVEDIARTARESIRFFLAELSIECVPYTQDPALEAQVASATRCWPDRERLAPHIRTGIVIAATAYAHNSLATRTLIALYTAIGVALDEPDILESANAIGFHHSLCTETSERPSAILDEWRRILARMWDHFPRFGASCILTSTLQFLNMTMLENETKGKVLNRTAMPFVEYRRMTDGFPEVYTAFIWEKGRFPDVQVYMQAIPNAMRFINFGNDILSFYKEEAAGETGTYIHDRARLTGLSSVETLREVVEETVSAWRQVCEILGEGIARDAWNSFVRGYVTFHVHNPRYRLSELL.

The Mg(2+) site is built by D132, E197, N257, S261, and E265. The DDXXXXD motif motif lies at 132–138 (DEPDILE). Residues 257 to 265 (NDILSFYKE) carry the NSE/DTE motif motif.

The protein belongs to the trichodiene synthase family. It depends on Mg(2+) as a cofactor.

Functionally, terpene cyclase that catalyzes the cyclization of farnesyl diphosphate (FPP) to a single major terpene scaffold whose chemical structure is still unknown. This Postia placenta (strain ATCC 44394 / Madison 698-R) (Brown rot fungus) protein is Terpene synthase 29.